The chain runs to 1204 residues: ATP-dependent helicase/nuclease subunit A (1204 aa).

Positions T2–T469 constitute a UvrD-like helicase ATP-binding domain. Position 23–30 (A23–T30) interacts with ATP. The 289-residue stretch at E496–G784 folds into the UvrD-like helicase C-terminal domain.

This sequence belongs to the helicase family. AddA subfamily. Heterodimer of AddA and AddB/RexB. Mg(2+) serves as cofactor.

The enzyme catalyses Couples ATP hydrolysis with the unwinding of duplex DNA by translocating in the 3'-5' direction.. It carries out the reaction ATP + H2O = ADP + phosphate + H(+). In terms of biological role, the heterodimer acts as both an ATP-dependent DNA helicase and an ATP-dependent, dual-direction single-stranded exonuclease. Recognizes the chi site generating a DNA molecule suitable for the initiation of homologous recombination. The AddA nuclease domain is required for chi fragment generation; this subunit has the helicase and 3' -&gt; 5' nuclease activities. This is ATP-dependent helicase/nuclease subunit A from Lactobacillus johnsonii (strain CNCM I-12250 / La1 / NCC 533).